We begin with the raw amino-acid sequence, 586 residues long: Guanylate-binding protein 5 (586 aa).

The NLRP3-binding stretch occupies residues 1-306; sequence MALEIHMSDP…TYVNAISSGD (306 aa). The segment at 1–309 is GTPase domain (Globular); it reads MALEIHMSDP…NAISSGDLPC (309 aa). Residues 35–276 enclose the GB1/RHD3-type G domain; it reads TQPVVVVAIV…FCSYIFSHSM (242 aa). GTP contacts are provided by residues 45–52, 67–69, 181–182, and Leu245; these read GLYRTGKS, VAS, and RD. Residues 529 to 586 form a required for tetramerization, but not for dimerization region; the sequence is MEIAKQNWLAEQQKMQEQQMQEQAAQLSTTFQAQNRSLLSELQHAQRTVNNDDPCVLL. A Cysteine methyl ester modification is found at Cys583. Cys583 is lipidated: S-geranylgeranyl cysteine. A propeptide spans 584-586 (removed in mature form); sequence VLL.

Belongs to the TRAFAC class dynamin-like GTPase superfamily. GB1/RHD3 GTPase family. GB1 subfamily. As to quaternary structure, homodimer; homodimerizes upon GTP-binding, forming a close face-to-face dimer. Heterodimer with other family members, including GBP1, GBP2, GBP3 and GBP4. May also form tetramers (dimer of dimers) in the presence of GTP. Interacts with NLRP3, possibly in its tetrameric form, and promotes PYCARD/ASC polymerization. In terms of assembly, homodimer; homodimerizes upon GTP-binding. GDP-bound form remains homodimeric. Homodimer; homodimerizes upon GTP-binding. GDP-bound is monomeric. Isoprenylation is required for proper subcellular location. As to expression, expressed in peripheral blood monocytes (at protein level).

The protein localises to the cytoplasmic vesicle membrane. The protein resides in the golgi apparatus membrane. Its subcellular location is the cytoplasm. The enzyme catalyses GTP + H2O = GDP + phosphate + H(+). Interferon (IFN)-inducible GTPase that plays important roles in innate immunity against a diverse range of bacterial, viral and protozoan pathogens. Hydrolyzes GTP, but in contrast to other family members, does not produce GMP. Following infection, recruited to the pathogen-containing vacuoles or vacuole-escaped bacteria and acts as a positive regulator of inflammasome assembly by promoting the release of inflammasome ligands from bacteria. Acts by promoting lysis of pathogen-containing vacuoles, releasing pathogens into the cytosol. Following pathogen release in the cytosol, promotes recruitment of proteins that mediate bacterial cytolysis: this liberates ligands that are detected by inflammasomes, such as lipopolysaccharide (LPS) that activates the non-canonical CASP4/CASP11 inflammasome or double-stranded DNA (dsDNA) that activates the AIM2 inflammasome. As an activator of NLRP3 inflammasome assembly: promotes selective NLRP3 inflammasome assembly in response to microbial and soluble, but not crystalline, agents. Independently of its GTPase activity, acts as an inhibitor of various viruses infectivity, such as HIV-1, Zika and influenza A viruses, by inhibiting FURIN-mediated maturation of viral envelope proteins. Its function is as follows. Antigenic tumor-specific truncated splice form. The protein is Guanylate-binding protein 5 of Homo sapiens (Human).